Reading from the N-terminus, the 437-residue chain is Glutamate-1-semialdehyde 2,1-aminomutase (437 aa).

Lys-274 is modified (N6-(pyridoxal phosphate)lysine).

The protein belongs to the class-III pyridoxal-phosphate-dependent aminotransferase family. HemL subfamily. As to quaternary structure, homodimer. It depends on pyridoxal 5'-phosphate as a cofactor.

The protein localises to the cytoplasm. The catalysed reaction is (S)-4-amino-5-oxopentanoate = 5-aminolevulinate. Its pathway is porphyrin-containing compound metabolism; protoporphyrin-IX biosynthesis; 5-aminolevulinate from L-glutamyl-tRNA(Glu): step 2/2. In Leptothrix cholodnii (strain ATCC 51168 / LMG 8142 / SP-6) (Leptothrix discophora (strain SP-6)), this protein is Glutamate-1-semialdehyde 2,1-aminomutase.